Consider the following 383-residue polypeptide: Centractin (383 aa).

A disordered region spans residues 227-246 (PQKEEELLEPDSSSSKPVQP).

The protein belongs to the actin family. ARP1 subfamily.

It is found in the cytoplasm. It localises to the cytoskeleton. The protein resides in the microtubule organizing center. The protein localises to the centrosome. Component of a multi-subunit complex, PPK2 (poly P kinase complex 2) involved in microtubule based vesicle motility. It is associated with the centrosome. PPK2 complex can synthesize a poly chain of hundreds of phosphate residues linked by ATP-like bonds. The protein is Centractin (arpA) of Dictyostelium discoideum (Social amoeba).